Here is a 289-residue protein sequence, read N- to C-terminus: ATP synthase gamma chain (289 aa).

It belongs to the ATPase gamma chain family. In terms of assembly, F-type ATPases have 2 components, CF(1) - the catalytic core - and CF(0) - the membrane proton channel. CF(1) has five subunits: alpha(3), beta(3), gamma(1), delta(1), epsilon(1). CF(0) has three main subunits: a, b and c.

It is found in the cell membrane. Produces ATP from ADP in the presence of a proton gradient across the membrane. The gamma chain is believed to be important in regulating ATPase activity and the flow of protons through the CF(0) complex. This chain is ATP synthase gamma chain, found in Lactococcus lactis subsp. cremoris (strain MG1363).